Consider the following 326-residue polypeptide: Gamma-resorcylate decarboxylase (326 aa).

Glutamate 8, histidine 10, histidine 164, and aspartate 287 together coordinate Mn(2+). Aspartate 287 is an active-site residue.

Belongs to the metallo-dependent hydrolases superfamily. ACMSD family. As to quaternary structure, homotetramer. The cofactor is Mn(2+).

The catalysed reaction is 2,6-dihydroxybenzoate + H(+) = resorcinol + CO2. It carries out the reaction 2,3-dihydroxybenzoate + H(+) = catechol + CO2. It participates in aromatic compound metabolism. With respect to regulation, activity is inhibited by 2-nitroresorcinol (2-NR). Involved in the gamma-resorcylate (2,6-dihydroxybenzoate) catabolism. Catalyzes the reversible decarboxylation of gamma-resorcylate to resorcinol. Also catalyzes the decarboxylation of 2,3-dihydroxybenzoate to catechol, 2,4,6-trihydroxybenzoate to benzene-1,3,5-triol, and 2,6-dihydroxy-4-methylbenzoate to 5-methylbenzene-1,3-diol. The sequence is that of Gamma-resorcylate decarboxylase from Polaromonas sp. (strain JS666 / ATCC BAA-500).